Reading from the N-terminus, the 647-residue chain is Threonine--tRNA ligase (647 aa).

A TGS domain is found at 1-61 (MIKITFPDGA…EEDGSIEIVT (61 aa)). The segment at 240–538 (DHRKLGKELD…LIETYKGAFP (299 aa)) is catalytic. Zn(2+)-binding residues include C334, H385, and H515.

The protein belongs to the class-II aminoacyl-tRNA synthetase family. In terms of assembly, homodimer. Requires Zn(2+) as cofactor.

It localises to the cytoplasm. It carries out the reaction tRNA(Thr) + L-threonine + ATP = L-threonyl-tRNA(Thr) + AMP + diphosphate + H(+). Its function is as follows. Catalyzes the attachment of threonine to tRNA(Thr) in a two-step reaction: L-threonine is first activated by ATP to form Thr-AMP and then transferred to the acceptor end of tRNA(Thr). Also edits incorrectly charged L-seryl-tRNA(Thr). This Streptococcus pyogenes serotype M49 (strain NZ131) protein is Threonine--tRNA ligase.